The following is a 162-amino-acid chain: Transcriptional repressor NrdR (162 aa).

The segment at C3–C34 is a zinc-finger region. The 91-residue stretch at V48–E138 folds into the ATP-cone domain.

Belongs to the NrdR family. It depends on Zn(2+) as a cofactor.

Negatively regulates transcription of bacterial ribonucleotide reductase nrd genes and operons by binding to NrdR-boxes. The sequence is that of Transcriptional repressor NrdR from Protochlamydia amoebophila (strain UWE25).